The chain runs to 197 residues: Glycerol-3-phosphate acyltransferase (197 aa).

Helical transmembrane passes span 5–25 (LILI…VGKI), 70–90 (LPVL…AVIG), 111–131 (VMLF…FIVL), and 153–173 (IFFT…AFIF).

It belongs to the PlsY family. Probably interacts with PlsX.

The protein resides in the cell membrane. The catalysed reaction is an acyl phosphate + sn-glycerol 3-phosphate = a 1-acyl-sn-glycero-3-phosphate + phosphate. The protein operates within lipid metabolism; phospholipid metabolism. Functionally, catalyzes the transfer of an acyl group from acyl-phosphate (acyl-PO(4)) to glycerol-3-phosphate (G3P) to form lysophosphatidic acid (LPA). This enzyme utilizes acyl-phosphate as fatty acyl donor, but not acyl-CoA or acyl-ACP. The protein is Glycerol-3-phosphate acyltransferase of Geobacillus sp. (strain WCH70).